A 656-amino-acid chain; its full sequence is Protein terminal ear1 (656 aa).

The region spanning 211–283 (SLVVLSPLPG…RRLVVEFTRP (73 aa)) is the RRM domain. Disordered stretches follow at residues 280–408 (FTRP…WKGR) and 576–656 (LTDP…GYDD). The segment covering 288–299 (PRRRGYAPHQHR) has biased composition (basic residues). The segment covering 314–331 (PSQPTSSQPPASSSSSGS) has biased composition (low complexity). Over residues 346–358 (CKSSAGSDQSSKG) the composition is skewed to polar residues. Low complexity-rich tracts occupy residues 377–397 (AAAA…QKGV), 585–601 (RSPA…SRAA), and 612–630 (PAPS…STHA). Residues 642 to 656 (DIRLAGELRRLGYDD) are compositionally biased toward basic and acidic residues.

As to expression, expressed below the shoot tip down the flanks of shoot apex in an alternating pattern. Not expressed in root tips, leaves or immature ears (female inflorescences).

Probable RNA-binding protein. Involved in the regulation of leaf initiation rate and shoot development. Seems to act more predominantly in the early stages of the leaf development, rather than in the later phase. This Zea mays (Maize) protein is Protein terminal ear1 (TE1).